Consider the following 934-residue polypeptide: Bifunctional uridylyltransferase/uridylyl-removing enzyme (934 aa).

The uridylyltransferase stretch occupies residues 1–379; sequence MSAHDLKLEE…TFSRRKRKLS (379 aa). The tract at residues 380–736 is uridylyl-removing; that stretch reads ADGDFVSENH…AKPHTFEAVT (357 aa). Positions 496-613 constitute an HD domain; the sequence is VDEHLLRCIA…IDFADTVQTM (118 aa). ACT domains are found at residues 737–819 and 848–931; these read EITV…VLAK and VIEV…RSSQ.

It belongs to the GlnD family. It depends on Mg(2+) as a cofactor.

It catalyses the reaction [protein-PII]-L-tyrosine + UTP = [protein-PII]-uridylyl-L-tyrosine + diphosphate. The catalysed reaction is [protein-PII]-uridylyl-L-tyrosine + H2O = [protein-PII]-L-tyrosine + UMP + H(+). With respect to regulation, uridylyltransferase (UTase) activity is inhibited by glutamine, while glutamine activates uridylyl-removing (UR) activity. Its function is as follows. Modifies, by uridylylation and deuridylylation, the PII regulatory proteins (GlnB and homologs), in response to the nitrogen status of the cell that GlnD senses through the glutamine level. Under low glutamine levels, catalyzes the conversion of the PII proteins and UTP to PII-UMP and PPi, while under higher glutamine levels, GlnD hydrolyzes PII-UMP to PII and UMP (deuridylylation). Thus, controls uridylylation state and activity of the PII proteins, and plays an important role in the regulation of nitrogen assimilation and metabolism. The protein is Bifunctional uridylyltransferase/uridylyl-removing enzyme of Brucella anthropi (strain ATCC 49188 / DSM 6882 / CCUG 24695 / JCM 21032 / LMG 3331 / NBRC 15819 / NCTC 12168 / Alc 37) (Ochrobactrum anthropi).